The chain runs to 179 residues: Negative modulator of initiation of replication (179 aa).

The protein belongs to the SeqA family. In terms of assembly, homodimer. Polymerizes to form helical filaments.

It localises to the cytoplasm. Its function is as follows. Negative regulator of replication initiation, which contributes to regulation of DNA replication and ensures that replication initiation occurs exactly once per chromosome per cell cycle. Binds to pairs of hemimethylated GATC sequences in the oriC region, thus preventing assembly of replication proteins and re-initiation at newly replicated origins. Repression is relieved when the region becomes fully methylated. The sequence is that of Negative modulator of initiation of replication from Vibrio atlanticus (strain LGP32) (Vibrio splendidus (strain Mel32)).